A 196-amino-acid polypeptide reads, in one-letter code: ATP-dependent Clp protease proteolytic subunit (196 aa).

The active-site Nucleophile is the serine 101. Histidine 126 is an active-site residue.

This sequence belongs to the peptidase S14 family. As to quaternary structure, component of the chloroplastic Clp protease core complex.

It localises to the plastid. It is found in the chloroplast stroma. It carries out the reaction Hydrolysis of proteins to small peptides in the presence of ATP and magnesium. alpha-casein is the usual test substrate. In the absence of ATP, only oligopeptides shorter than five residues are hydrolyzed (such as succinyl-Leu-Tyr-|-NHMec, and Leu-Tyr-Leu-|-Tyr-Trp, in which cleavage of the -Tyr-|-Leu- and -Tyr-|-Trp bonds also occurs).. Cleaves peptides in various proteins in a process that requires ATP hydrolysis. Has a chymotrypsin-like activity. Plays a major role in the degradation of misfolded proteins. The sequence is that of ATP-dependent Clp protease proteolytic subunit from Lactuca sativa (Garden lettuce).